The chain runs to 714 residues: Protein ESC8 (714 aa).

Disordered stretches follow at residues 598–674 (APTG…ELHN) and 694–714 (RQLQDNSREKRSLRRNARKGL). Over residues 610 to 624 (TSSQRRTTVHYSSDV) the composition is skewed to polar residues. Residues 628 to 650 (VSEESENEVDIDVSDDYDSEYLS) are compositionally biased toward acidic residues. Over residues 654-674 (TLTRKGEDRTDKSFGKRELHN) the composition is skewed to basic and acidic residues. A compositionally biased stretch (basic residues) spans 704-714 (RSLRRNARKGL).

As to quaternary structure, interacts with GAL11 and SIR2.

It is found in the cytoplasm. It localises to the nucleus. In terms of biological role, involved in HMR and telomere silencing via the recruitment or stabilizing of the SIR (silent information regulators) complex. The sequence is that of Protein ESC8 (ESC8) from Saccharomyces cerevisiae (strain ATCC 204508 / S288c) (Baker's yeast).